The primary structure comprises 96 residues: Large ribosomal subunit protein bL28 (96 aa).

The disordered stretch occupies residues 1–21; sequence MSRVCELTGKGPMTGNNVSHA.

This sequence belongs to the bacterial ribosomal protein bL28 family.

The sequence is that of Large ribosomal subunit protein bL28 from Jannaschia sp. (strain CCS1).